Here is a 350-residue protein sequence, read N- to C-terminus: Inner membrane protein YhiM (350 aa).

Over 1–2 (MN) the chain is Cytoplasmic. Residues 3–23 (IYIGWLFKLIPLIMGLICIAL) form a helical membrane-spanning segment. Topologically, residues 24–41 (GGFVLESSGQSEYFVAGH) are periplasmic. The helical transmembrane segment at 42-62 (VLISLAAICLALFTTAFIIIS) threads the bilayer. At 63–74 (QLTRGVNTFYNT) the chain is on the cytoplasmic side. Residues 75-95 (LFPIIGYAGSIITMIWGWALL) form a helical membrane-spanning segment. The Periplasmic portion of the chain corresponds to 96 to 104 (AGNDVMADE). A helical transmembrane segment spans residues 105–125 (FVAGHVIFGVGMIAACVSTVA). Over 126–157 (ASSGHFLLIPKNAAGSKSDGTPVQAYSSLIGN) the chain is Cytoplasmic. Residues 158–178 (CLIAVPVLLTLLGFIWSITLL) form a helical membrane-spanning segment. Topologically, residues 179–190 (RSADITPHYVAG) are periplasmic. The chain crosses the membrane as a helical span at residues 191–211 (HVLLGLTAICACLIGLVATIV). Residues 212–225 (HQTRNTFSTKEHWL) lie on the Cytoplasmic side of the membrane. The helical transmembrane segment at 226–246 (WCYWVIFLGSITVLQGIYVLV) threads the bilayer. Topologically, residues 247-257 (SSDASARLAPG) are periplasmic. Residues 258 to 278 (IILICLGMICYSIFSKVWLLA) form a helical membrane-spanning segment. The Cytoplasmic segment spans residues 279–290 (LVWRRTCSLANR). A helical transmembrane segment spans residues 291-311 (IPMIPVFTCLFCLFLASFLAE). Topologically, residues 312-324 (MAQTDMGYFIPSR) are periplasmic. A helical membrane pass occupies residues 325 to 345 (VLVGLGAVCFTLFSIVSILEA). The Cytoplasmic segment spans residues 346–350 (GSAKK).

The protein localises to the cell inner membrane. The sequence is that of Inner membrane protein YhiM (yhiM) from Escherichia coli (strain K12).